The following is a 257-amino-acid chain: Imidazole glycerol phosphate synthase subunit HisF (257 aa).

Catalysis depends on residues Asp12 and Asp131.

Belongs to the HisA/HisF family. As to quaternary structure, heterodimer of HisH and HisF.

Its subcellular location is the cytoplasm. It catalyses the reaction 5-[(5-phospho-1-deoxy-D-ribulos-1-ylimino)methylamino]-1-(5-phospho-beta-D-ribosyl)imidazole-4-carboxamide + L-glutamine = D-erythro-1-(imidazol-4-yl)glycerol 3-phosphate + 5-amino-1-(5-phospho-beta-D-ribosyl)imidazole-4-carboxamide + L-glutamate + H(+). Its pathway is amino-acid biosynthesis; L-histidine biosynthesis; L-histidine from 5-phospho-alpha-D-ribose 1-diphosphate: step 5/9. Functionally, IGPS catalyzes the conversion of PRFAR and glutamine to IGP, AICAR and glutamate. The HisF subunit catalyzes the cyclization activity that produces IGP and AICAR from PRFAR using the ammonia provided by the HisH subunit. The polypeptide is Imidazole glycerol phosphate synthase subunit HisF (Hydrogenovibrio crunogenus (strain DSM 25203 / XCL-2) (Thiomicrospira crunogena)).